Consider the following 517-residue polypeptide: Tyrosine-protein kinase Fgr (517 aa).

A lipid anchor (N-myristoyl glycine) is attached at glycine 2. S-palmitoyl cysteine attachment occurs at residues cysteine 3 and cysteine 6. Over residues valine 17–tyrosine 33 the composition is skewed to basic and acidic residues. Positions valine 17–proline 46 are disordered. Tyrosine 32 is subject to Phosphotyrosine. Residue serine 50 is modified to Phosphoserine. One can recognise an SH3 domain in the interval threonine 65–serine 126. Residues tryptophan 132 to cysteine 229 form the SH2 domain. The residue at position 196 (tyrosine 196) is a Phosphotyrosine. The residue at position 206 (serine 206) is a Phosphoserine. Residues isoleucine 251 to phenylalanine 504 enclose the Protein kinase domain. ATP-binding positions include leucine 257 to valine 265 and lysine 279. The active-site Proton acceptor is the aspartate 370. Phosphotyrosine; by autocatalysis is present on tyrosine 400. Position 511 is a phosphotyrosine; by SRC (tyrosine 511).

The protein belongs to the protein kinase superfamily. Tyr protein kinase family. SRC subfamily. Interacts with ITGB1, ITGB2, MS4A2/FCER1B and FCGR2. Interacts (via SH2 domain) with SYK (tyrosine phosphorylated). Interacts (via SH2 domain) with FLT3 (tyrosine phosphorylated). Interacts with PTK2/FAK1. Interacts (via SH2 domain) with HCLS1 (tyrosine phosphorylated by SYK). Interacts with SIRPA and PTPNS1. Interacts (not phosphorylated on tyrosine residues) with CBL; FGR tyrosine phosphorylation promotes dissociation. Interacts with CLNK. Post-translationally, ubiquitinated. Becomes ubiquitinated in response to ITGB2 signaling; this does not lead to degradation. In terms of processing, phosphorylated. Autophosphorylated on tyrosine residues. Becomes phosphorylated in response to FCGR2 engagement, cell adhesion and signaling by ITGB2. Prior phosphorylation at Tyr-511 by SRC inhibits ulterior autophosphorylation at Tyr-400. As to expression, detected in brain cortex (at protein level).

It is found in the cell membrane. Its subcellular location is the cell projection. The protein localises to the ruffle membrane. It localises to the cytoplasm. The protein resides in the cytosol. It is found in the cytoskeleton. Its subcellular location is the mitochondrion inner membrane. The protein localises to the mitochondrion intermembrane space. The catalysed reaction is L-tyrosyl-[protein] + ATP = O-phospho-L-tyrosyl-[protein] + ADP + H(+). Its activity is regulated as follows. Activated by autophosphorylation. Prior phosphorylation at Tyr-511 by SRC inhibits ulterior autophosphorylation at Tyr-400. Activated by phorbol myristate acetate, phosphatidic acid and poly-Lys. Binding (via SH2 domain) of HCLS1 that is already phosphorylated by SYK strongly increases kinase activity. Non-receptor tyrosine-protein kinase that transmits signals from cell surface receptors devoid of kinase activity and contributes to the regulation of immune responses, including neutrophil, monocyte, macrophage and mast cell functions, cytoskeleton remodeling in response to extracellular stimuli, phagocytosis, cell adhesion and migration. Promotes mast cell degranulation, release of inflammatory cytokines and IgE-mediated anaphylaxis. Acts downstream of receptors that bind the Fc region of immunoglobulins, such as MS4A2/FCER1B, FCER1G and FCGR2. Acts downstream of ITGB1 and ITGB2, and regulates actin cytoskeleton reorganization, cell spreading and adhesion. Depending on the context, activates or inhibits cellular responses. Functions as a negative regulator of ITGB2 signaling, phagocytosis and SYK activity in monocytes. Required for normal ITGB1 and ITGB2 signaling, normal cell spreading and adhesion in neutrophils and macrophages. Functions as a positive regulator of cell migration and regulates cytoskeleton reorganization via RAC1 activation. Phosphorylates SYK (in vitro) and promotes SYK-dependent activation of AKT1 and MAP kinase signaling. Phosphorylates PLD2 in antigen-stimulated mast cells, leading to PLD2 activation and the production of the signaling molecules lysophosphatidic acid and diacylglycerol. Promotes activation of PIK3R1. Phosphorylates FASLG, and thereby regulates its ubiquitination and subsequent internalization. Phosphorylates ABL1. Promotes phosphorylation of CBL, CTTN, PIK3R1, PTK2/FAK1, PTK2B/PYK2 and VAV2. Phosphorylates HCLS1 that has already been phosphorylated by SYK, but not unphosphorylated HCLS1. Together with CLNK, it acts as a negative regulator of natural killer cell-activating receptors and inhibits interferon-gamma production. This is Tyrosine-protein kinase Fgr (Fgr) from Rattus norvegicus (Rat).